Reading from the N-terminus, the 365-residue chain is Eukaryotic translation initiation factor 3 subunit H (365 aa).

In terms of domain architecture, MPN spans 11 to 160 (VKVEALVVMK…LRAFRLSPKF (150 aa)).

Belongs to the eIF-3 subunit H family. In terms of assembly, component of the eukaryotic translation initiation factor 3 (eIF-3) complex.

It is found in the cytoplasm. Component of the eukaryotic translation initiation factor 3 (eIF-3) complex, which is involved in protein synthesis of a specialized repertoire of mRNAs and, together with other initiation factors, stimulates binding of mRNA and methionyl-tRNAi to the 40S ribosome. The eIF-3 complex specifically targets and initiates translation of a subset of mRNAs involved in cell proliferation. This Aspergillus terreus (strain NIH 2624 / FGSC A1156) protein is Eukaryotic translation initiation factor 3 subunit H.